A 488-amino-acid chain; its full sequence is Glutamyl-tRNA(Gln) amidotransferase subunit B, mitochondrial (488 aa).

Belongs to the GatB/GatE family. GatB subfamily. Subunit of the heterotrimeric GatFAB amidotransferase (AdT) complex, composed of A, B and F subunits.

It is found in the mitochondrion. It carries out the reaction L-glutamyl-tRNA(Gln) + L-glutamine + ATP + H2O = L-glutaminyl-tRNA(Gln) + L-glutamate + ADP + phosphate + H(+). Its function is as follows. Allows the formation of correctly charged Gln-tRNA(Gln) through the transamidation of misacylated Glu-tRNA(Gln) in the mitochondria. The reaction takes place in the presence of glutamine and ATP through an activated gamma-phospho-Glu-tRNA(Gln). The chain is Glutamyl-tRNA(Gln) amidotransferase subunit B, mitochondrial from Candida albicans (strain WO-1) (Yeast).